The primary structure comprises 155 residues: Endoribonuclease YbeY (155 aa).

Residues H114, H118, and H124 each coordinate Zn(2+).

Belongs to the endoribonuclease YbeY family. Requires Zn(2+) as cofactor.

The protein localises to the cytoplasm. Its function is as follows. Single strand-specific metallo-endoribonuclease involved in late-stage 70S ribosome quality control and in maturation of the 3' terminus of the 16S rRNA. The chain is Endoribonuclease YbeY from Proteus mirabilis (strain HI4320).